The sequence spans 354 residues: Interferon-inducible protein AIM2 (354 aa).

Residues 1–87 (MESEYREMLL…ANALEEKKKE (87 aa)) form the Pyrin domain. The interval 95 to 124 (NTKKRGTQKVENRSQAENCSAASATRSDND) is disordered. The span at 109-120 (QAENCSAASATR) shows a compositional bias: polar residues. Residues 144-341 (MVAEQEAIRE…SGPCSFFKVI (198 aa)) enclose the HIN-200 domain.

Belongs to the HIN-200 family. Self-associates; forms homooligomers in response to cytosolic double-stranded DNA (dsDNA) and the dsDNA seems to serve as oligomerization platform. Component of AIM2 inflammasome, which consists of a signal sensor component (AIM2), an adapter (PYCARD/ASC), which recruits an effector pro-inflammatory caspase (CASP1). Interacts (via pyrin domain) with PYCARD/ASC (via pyrin domain); interaction is direct. Component of the AIM2 PANoptosome complex, a multiprotein complex that drives inflammatory cell death (PANoptosis). Interacts with EIF2AK2/PKR. Interacts with MAPRE1. Interacts (via HIN-200 domain) with IFI202 (via HIN-200 domain 2); preventing activation of the AIM2 inflammasome. Interacts with RACK1; promoting association with PP2A phosphatase and dephosphorylation of AKT1. Interacts with TRIM11; promoting AIM2 recruitment to autophagosomes and autophagy-dependent degradation. Post-translationally, degraded via selective autophagy following interaction with TRIM11. In terms of tissue distribution, expressed in developing neurons. Highly expressed in regulatory T-cells (Treg).

The protein resides in the cytoplasm. Its subcellular location is the inflammasome. The protein localises to the nucleus. With respect to regulation, inactive in absence of double-stranded DNA (dsDNA). Homooligomerizes upon binding to dsDNA, dsDNA serving as an oligomerization platform. AIM2 requires large dsDNA to generate a structural template that couples dsDNA ligand-binding and homooligomerization. Homooligomerization is followed by recruitment of PYCARD/ASC to initiate speck formation (nucleation). AIM2 and PYCARD/ASC homooligomer filaments assemble bidirectionally and the recognition between AIM2 and PYCARD/ASC oligomers occurs in a head-to-tail manner. Clustered PYCARD/ASC nucleates the formation of CASP1 filaments through the interaction of their respective CARD domains, acting as a platform for CASP1 polymerization and activation. Active CASP1 then specifically processes protein precursors, such as gasdermin-D (GSDMD), IL1B and IL18, leading to the release of mature cytokines in the extracellular milieu or pyroptosis, depending on cell type. AIM2 can be activated in response to events that cause genomic DNA (HIV protease inhibitor nelfinavir) or mitochondrial DNA release in the cytoplasm (such as Perfluoroalkyl substance pollutants or cholesterol overload). Activation of the AIM2 inflammasome is inhibited by IFI202. Activation of the AIM2 inflammasome is inhibited by TRIM11, which promotes autophagy-dependent degradation of AIM2. Sensor component of the AIM2 inflammasome, which mediates inflammasome activation in response to the presence of double-stranded DNA (dsDNA) in the cytosol, leading to subsequent pyroptosis. Inflammasomes are supramolecular complexes that assemble in the cytosol in response to pathogens and other damage-associated signals and play critical roles in innate immunity and inflammation. Acts as a recognition receptor (PRR): specifically recognizes and binds dsDNA in the cytosol, and mediates the formation of the inflammasome polymeric complex composed of AIM2, CASP1 and PYCARD/ASC. Recruitment of pro-caspase-1 (proCASP1) to the AIM2 inflammasome promotes caspase-1 (CASP1) activation, which subsequently cleaves and activates inflammatory cytokines IL1B and IL18 and gasdermin-D (GSDMD), promoting cytokine secretion. In some cells, CASP1 activation mediates cleavage and activation of GSDMD, triggering pyroptosis without promoting cytokine secretion. Detects cytosolic dsDNA of viral and bacterial origin in a non-sequence-specific manner. Involved in the DNA damage response caused by acute ionizing radiation by mediating pyroptosis of intestinal epithelial cells and bone marrow cells in response to double-strand DNA breaks. Mechanistically, AIM2 senses DNA damage in the nucleus to mediate inflammasome assembly and inflammatory cell death. Also acts as a regulator of neurodevelopment via its role in the DNA damage response: acts by promoting neural cell death in response to DNA damage in the developing brain, thereby purging genetically compromised cells of the central nervous system. Pyroptosis mediated by the AIM2 inflammasome in response to DNA damage is dependent on GSDMD without involving IL1B and IL18 cytokine secretion. Also acts as a mediator of pyroptosis, necroptosis and apoptosis (PANoptosis), an integral part of host defense against pathogens, in response to bacterial infection. Can also trigger PYCARD/ASC-dependent, caspase-1-independent cell death that involves caspase-8 (CASP8). Its function is as follows. Also acts as a tumor suppressor independently of its role in inflammatory response. Able to suppress overt cell proliferation in enterocytes: restricts stem cell proliferation in the intestinal mucosa in an inflammasome-independent manner, contributing to a decrease in the likelihood of colorectal cancer development. AIM2 suppresses cell proliferation by inhibiting phosphorylation of AKT1 at 'Ser-473', preventing AKT1 activation and AKT-mTOR signaling pathway. Inhibits AKT1 phosphorylation both by inhibiting the activity of PRKDC/DNA-PK kinase and promoting dephosphorylation by PP2A phosphatase. Also acts as a key regulator of regulatory T-cells (Treg) homeostasis by promoting their stability: acts by preventing AKT1 activation. Its role in Treg homeostasis is important to restain autoimmune diseases. The sequence is that of Interferon-inducible protein AIM2 from Mus musculus (Mouse).